Consider the following 398-residue polypeptide: Acetate kinase (398 aa).

Asn9 serves as a coordination point for Mg(2+). Lys16 is an ATP binding site. Position 90 (Arg90) interacts with substrate. The active-site Proton donor/acceptor is Asp147. ATP is bound by residues 207–211 (HIGNG), 282–284 (DLR), and 330–334 (GVGEN). Glu384 is a Mg(2+) binding site.

It belongs to the acetokinase family. Homodimer. The cofactor is Mg(2+). Requires Mn(2+) as cofactor.

It is found in the cytoplasm. It catalyses the reaction acetate + ATP = acetyl phosphate + ADP. It participates in metabolic intermediate biosynthesis; acetyl-CoA biosynthesis; acetyl-CoA from acetate: step 1/2. Catalyzes the formation of acetyl phosphate from acetate and ATP. Can also catalyze the reverse reaction. The chain is Acetate kinase from Staphylococcus haemolyticus (strain JCSC1435).